Here is a 126-residue protein sequence, read N- to C-terminus: uncharacterized protein (126 aa).

This is an uncharacterized protein from Saccharomyces cerevisiae (strain ATCC 204508 / S288c) (Baker's yeast).